The sequence spans 247 residues: Adenosylcobinamide-GDP ribazoletransferase (247 aa).

5 consecutive transmembrane segments (helical) span residues isoleucine 34–valine 54, cysteine 59–phenylalanine 79, glycine 113–leucine 133, isoleucine 138–tyrosine 158, and valine 194–isoleucine 214.

It belongs to the CobS family. The cofactor is Mg(2+).

Its subcellular location is the cell inner membrane. It catalyses the reaction alpha-ribazole + adenosylcob(III)inamide-GDP = adenosylcob(III)alamin + GMP + H(+). The catalysed reaction is alpha-ribazole 5'-phosphate + adenosylcob(III)inamide-GDP = adenosylcob(III)alamin 5'-phosphate + GMP + H(+). Its pathway is cofactor biosynthesis; adenosylcobalamin biosynthesis; adenosylcobalamin from cob(II)yrinate a,c-diamide: step 7/7. Its function is as follows. Joins adenosylcobinamide-GDP and alpha-ribazole to generate adenosylcobalamin (Ado-cobalamin). Also synthesizes adenosylcobalamin 5'-phosphate from adenosylcobinamide-GDP and alpha-ribazole 5'-phosphate. The protein is Adenosylcobinamide-GDP ribazoletransferase of Escherichia coli O127:H6 (strain E2348/69 / EPEC).